Reading from the N-terminus, the 309-residue chain is MNHPRKDLLNISSLTDEEIHTLLDSAGPMKELFTKSVKKVPALKGKSVLTLFYEPSTRTRSSFEVAAERLSADVTNFTVSTSSVVKGESVQDTIATLQAMKVDYVIVRHYNSGLPNVIARHTCASVVNAGDGAHAHPSQALLDSFTIREVFPDVRGKRVLIVGDILHSRVARSTSLLMKRLGMEVAFLGPGSLVPRTEHSGIPRFSDFNEAFAWKPDVIYLLRVQKERQDAPFFPSAREYNKIYGVTEERLKRISGEGLYIMHPGPVNRGVEICDLAMDYERCLINRQVENGIACRMSILYHLTPQTQH.

Residues R58 and T59 each contribute to the carbamoyl phosphate site. K86 contacts L-aspartate. Residues R108, H136, and Q139 each coordinate carbamoyl phosphate. The L-aspartate site is built by R169 and R223. Positions 265 and 266 each coordinate carbamoyl phosphate.

It belongs to the aspartate/ornithine carbamoyltransferase superfamily. ATCase family. In terms of assembly, heterododecamer (2C3:3R2) of six catalytic PyrB chains organized as two trimers (C3), and six regulatory PyrI chains organized as three dimers (R2).

The catalysed reaction is carbamoyl phosphate + L-aspartate = N-carbamoyl-L-aspartate + phosphate + H(+). It functions in the pathway pyrimidine metabolism; UMP biosynthesis via de novo pathway; (S)-dihydroorotate from bicarbonate: step 2/3. Its function is as follows. Catalyzes the condensation of carbamoyl phosphate and aspartate to form carbamoyl aspartate and inorganic phosphate, the committed step in the de novo pyrimidine nucleotide biosynthesis pathway. In Akkermansia muciniphila (strain ATCC BAA-835 / DSM 22959 / JCM 33894 / BCRC 81048 / CCUG 64013 / CIP 107961 / Muc), this protein is Aspartate carbamoyltransferase catalytic subunit.